The primary structure comprises 296 residues: NADH-ubiquinone oxidoreductase chain 2 (296 aa).

Transmembrane regions (helical) follow at residues Leu-5–Leu-25, Tyr-49–Phe-69, Phe-71–Val-91, Leu-114–Ile-134, Phe-167–Leu-187, Ala-209–Ile-229, Leu-242–Ala-262, and Lys-276–Leu-296.

Belongs to the complex I subunit 2 family.

It localises to the mitochondrion inner membrane. The enzyme catalyses a ubiquinone + NADH + 5 H(+)(in) = a ubiquinol + NAD(+) + 4 H(+)(out). Functionally, core subunit of the mitochondrial membrane respiratory chain NADH dehydrogenase (Complex I) that is believed to belong to the minimal assembly required for catalysis. Complex I functions in the transfer of electrons from NADH to the respiratory chain. The immediate electron acceptor for the enzyme is believed to be ubiquinone. The polypeptide is NADH-ubiquinone oxidoreductase chain 2 (ND2) (Artemia franciscana (Brine shrimp)).